Consider the following 234-residue polypeptide: Peptidase E (234 aa).

Catalysis depends on charge relay system residues S123, D138, and H160.

It belongs to the peptidase S51 family.

The protein localises to the cytoplasm. It catalyses the reaction Dipeptidase E catalyzes the hydrolysis of dipeptides Asp-|-Xaa. It does not act on peptides with N-terminal Glu, Asn or Gln, nor does it cleave isoaspartyl peptides.. Functionally, hydrolyzes dipeptides containing N-terminal aspartate residues. May play a role in allowing the cell to use peptide aspartate to spare carbon otherwise required for the synthesis of the aspartate family of amino acids. This chain is Peptidase E, found in Pasteurella multocida (strain Pm70).